The primary structure comprises 207 residues: Guanylate kinase (207 aa).

Positions Asn4–Ile184 constitute a Guanylate kinase-like domain. Residue Ala11–Ser18 coordinates ATP.

Belongs to the guanylate kinase family.

It is found in the cytoplasm. It carries out the reaction GMP + ATP = GDP + ADP. Essential for recycling GMP and indirectly, cGMP. The protein is Guanylate kinase of Wigglesworthia glossinidia brevipalpis.